A 502-amino-acid polypeptide reads, in one-letter code: UPF0371 protein CLJ_B0384 (502 aa).

This sequence belongs to the UPF0371 family.

In Clostridium botulinum (strain 657 / Type Ba4), this protein is UPF0371 protein CLJ_B0384.